The chain runs to 341 residues: Serine proteinase inhibitor 2 (341 aa).

The protein belongs to the serpin family. Poxviruses subfamily.

The protein resides in the host cytoplasm. In terms of biological role, viral serpin that inhibits both cysteine and serine proteinases involved in the regulation of host inflammatory and apoptosis processes. Major anti-apoptotic protein which inhibits both intrinsic and extrinsic pathways and strongly cleaves host CASP1 and CASP8 but is a rather poor inhibitor of host CASP3. Prevents the proteolytic activity of host interleukin-1-beta converting enzyme (ICE) and ICE-like enzymes. Can also block apoptosis through host tumor necrosis factor (TNF) receptor. The sequence is that of Serine proteinase inhibitor 2 (OPG199) from Bos taurus (Bovine).